A 246-amino-acid polypeptide reads, in one-letter code: Carboxy-S-adenosyl-L-methionine synthase (246 aa).

Residues Tyr39, 64–66 (GCS), 89–90 (DN), 117–118 (DI), Asn132, and Arg199 contribute to the S-adenosyl-L-methionine site.

The protein belongs to the class I-like SAM-binding methyltransferase superfamily. Cx-SAM synthase family. Homodimer.

It catalyses the reaction prephenate + S-adenosyl-L-methionine = carboxy-S-adenosyl-L-methionine + 3-phenylpyruvate + H2O. Its function is as follows. Catalyzes the conversion of S-adenosyl-L-methionine (SAM) to carboxy-S-adenosyl-L-methionine (Cx-SAM). This chain is Carboxy-S-adenosyl-L-methionine synthase, found in Enterobacter sp. (strain 638).